Here is a 304-residue protein sequence, read N- to C-terminus: Splicing factor U2af small subunit B (304 aa).

The C3H1-type 1 zinc-finger motif lies at 12–40 (EKDRVNCPFYFKIGACRHGDRCSRLHNRP). One can recognise an RRM domain in the interval 44-146 (PTIVLANMYQ…RPIIVEYSPV (103 aa)). The C3H1-type 2 zinc finger occupies 148-175 (DFREATCRQFEENSCNRGGYCNFMHVKQ). Positions 184–207 (LYGGRSRRSHGRSRSPSPRHRRGN) are enriched in basic residues. Positions 184 to 304 (LYGGRSRRSH…QWNREREEKP (121 aa)) are disordered. The span at 208-220 (RDRDDFRRERDGY) shows a compositional bias: basic and acidic residues. The segment covering 221–258 (RGGGDGYRGGGGGGGGDGYRGGDSYRGGGGGGRRGGGS) has biased composition (gly residues). Residues 268–280 (RRRHGSPPRRARS) show a composition bias toward basic residues. Positions 281–304 (PVRESSEERRAKIEQWNREREEKP) are enriched in basic and acidic residues.

It belongs to the splicing factor SR family.

The protein localises to the nucleus. In terms of biological role, necessary for the splicing of pre-mRNA. This Oryza sativa subsp. japonica (Rice) protein is Splicing factor U2af small subunit B (U2AF35B).